The sequence spans 282 residues: ADP-ribosyl cyclase/cyclic ADP-ribose hydrolase (282 aa).

The N-terminal stretch at 1-24 is a signal peptide; it reads MSPVAIIACVCLAVTLTSISPSEA. Intrachain disulfides connect Cys39–Cys58, Cys75–Cys155, Cys136–Cys149, Cys230–Cys251, and Cys263–Cys272.

The protein belongs to the ADP-ribosyl cyclase family. Post-translationally, has different isoforms which may be the result of different amounts of phosphorylation. As to expression, immature occoyctes. Oocytes.

The protein resides in the cytoplasmic vesicle. It carries out the reaction NAD(+) = cyclic ADP-beta-D-ribose + nicotinamide + H(+). The catalysed reaction is nicotinate + NADP(+) = nicotinate-adenine dinucleotide phosphate + nicotinamide. The enzyme catalyses 2'-phospho-cyclic ADP-ribose + nicotinate = nicotinate-adenine dinucleotide phosphate. With respect to regulation, activity is presumably regulated by its sequestration in vesicles before egg fertilization. After fertilization and upon NADase release, it could then be regulated via its potential phosphorylation sites. Functionally, synthesizes cyclic ADP-ribose (cADPR), a second messenger for calcium mobilization from endoplasmic reticulum; ADP-ribose is a minor product. Synthesizes the Ca(2+) mobilizer nicotinate-adenine dinucleotide phosphate from 2'-phospho-cADPR and nicotinic acid as well as from NADP(+) and nicotinic acid; with NADP(+) as substrate preferentially catalyzes NADP(+) hydrolysis rather than NAADP(+) synthesis, about 70-fold better at pH 7.4. Has cADPR hydrolase activity at very high enzyme concentrations, which is probably not physiological. The conversion of NAD(+) into ADP-ribose is also only observed at high enzyme concentrations and results from the hydrolysis of cADP-ribose. In Aplysia californica (California sea hare), this protein is ADP-ribosyl cyclase/cyclic ADP-ribose hydrolase.